The following is a 539-amino-acid chain: Probable K(+)/H(+) antiporter subunit D (539 aa).

14 helical membrane passes run 4-23 (WLDH…AAVL), 36-58 (AIGF…LAAA), 78-100 (FGIV…GLAL), 113-135 (AGHH…FLTG), 140-162 (LFVF…SGPL), 175-197 (LAAS…TLNM), 217-239 (MGSA…SFWL), 251-273 (AGVF…LLVF), 283-305 (FGQE…GVLA), 312-331 (LAGY…VGLG), 335-357 (MLAG…FLLI), 400-422 (VLGL…SGFI), 442-464 (AMSA…AMIA), and 484-506 (VVVI…SLQA).

It belongs to the CPA3 antiporters (TC 2.A.63) subunit D family. May form a hetero-oligomeric complex that consists of six subunits: PhaAB, PhaC, PhaD, PhaE, PhaF and PhaG.

It is found in the cell membrane. In terms of biological role, part of a K(+) efflux system which is required for the adaptation of R.meliloti to alkaline pH as well as for the infection process during symbiotic nodule development. In Rhizobium meliloti (strain 1021) (Ensifer meliloti), this protein is Probable K(+)/H(+) antiporter subunit D (phaD).